A 149-amino-acid chain; its full sequence is 3-hydroxyacyl-[acyl-carrier-protein] dehydratase FabZ (149 aa).

Residue H50 is part of the active site.

Belongs to the thioester dehydratase family. FabZ subfamily.

It is found in the cytoplasm. The enzyme catalyses a (3R)-hydroxyacyl-[ACP] = a (2E)-enoyl-[ACP] + H2O. Functionally, involved in unsaturated fatty acids biosynthesis. Catalyzes the dehydration of short chain beta-hydroxyacyl-ACPs and long chain saturated and unsaturated beta-hydroxyacyl-ACPs. In Pediococcus pentosaceus (strain ATCC 25745 / CCUG 21536 / LMG 10740 / 183-1w), this protein is 3-hydroxyacyl-[acyl-carrier-protein] dehydratase FabZ.